The primary structure comprises 322 residues: Elongation factor Ts, mitochondrial (322 aa).

Belongs to the EF-Ts family.

It is found in the mitochondrion. Its function is as follows. Associates with the EF-Tu.GDP complex and induces the exchange of GDP to GTP. It remains bound to the aminoacyl-tRNA.EF-Tu.GTP complex up to the GTP hydrolysis stage on the ribosome. This Chlamydomonas reinhardtii (Chlamydomonas smithii) protein is Elongation factor Ts, mitochondrial.